The following is a 156-amino-acid chain: MKVELDSFSGTKIYPGRGTLFVRGDSKIFRFQSSKSASLFHQRKNPRRISWTVLYRRQHKKGISEESAKRRTRKTVKNQRAIVGASLELIKERRSQKPSDRKAARDVKLAKDKEAKKADKAARKAEKAKSAAAGAQSKVSKQQSKGAFQKVHATSR.

Residues 87–156 are disordered; sequence LELIKERRSQ…AFQKVHATSR (70 aa). The span at 89 to 129 shows a compositional bias: basic and acidic residues; that stretch reads LIKERRSQKPSDRKAARDVKLAKDKEAKKADKAARKAEKAK. Residues 130-147 are compositionally biased toward low complexity; it reads SAAAGAQSKVSKQQSKGA.

The protein belongs to the eukaryotic ribosomal protein eL24 family.

This chain is Large ribosomal subunit protein eL24 (RPL24), found in Debaryomyces hansenii (strain ATCC 36239 / CBS 767 / BCRC 21394 / JCM 1990 / NBRC 0083 / IGC 2968) (Yeast).